Reading from the N-terminus, the 136-residue chain is 5-hydroxyisourate hydrolase (136 aa).

An N-terminal signal peptide occupies residues 1–22 (MKRHILATVIASLVAAPAMALA). Substrate contacts are provided by H31, R69, and Y133.

It belongs to the transthyretin family. 5-hydroxyisourate hydrolase subfamily. In terms of assembly, homotetramer.

It is found in the periplasm. The catalysed reaction is 5-hydroxyisourate + H2O = 5-hydroxy-2-oxo-4-ureido-2,5-dihydro-1H-imidazole-5-carboxylate + H(+). Functionally, catalyzes the hydrolysis of 5-hydroxyisourate (HIU) to 2-oxo-4-hydroxy-4-carboxy-5-ureidoimidazoline (OHCU). This chain is 5-hydroxyisourate hydrolase (hiuH), found in Salmonella dublin.